Here is a 287-residue protein sequence, read N- to C-terminus: Efem/EfeO family lipoprotein (287 aa).

The N-terminal stretch at 1-17 (MKKLPTILLASSLLLAA) is a signal peptide. C18 is lipidated: N-palmitoyl cysteine. C18 carries S-diacylglycerol cysteine lipidation. Residues 20 to 50 (NNSHSDDNSNKDKQSQSSKGENKASLQKATK) form a disordered region. The segment covering 23–33 (HSDDNSNKDKQ) has biased composition (basic and acidic residues).

It belongs to the EfeM/EfeO family.

The protein resides in the cell membrane. The chain is Efem/EfeO family lipoprotein from Staphylococcus haemolyticus (strain JCSC1435).